A 213-amino-acid polypeptide reads, in one-letter code: ATP-dependent Clp protease proteolytic subunit 1 (213 aa).

The active-site Nucleophile is the Ser-108. His-133 is an active-site residue.

This sequence belongs to the peptidase S14 family. In terms of assembly, fourteen ClpP subunits assemble into 2 heptameric rings which stack back to back to give a disk-like structure with a central cavity, resembling the structure of eukaryotic proteasomes.

Its subcellular location is the cytoplasm. The catalysed reaction is Hydrolysis of proteins to small peptides in the presence of ATP and magnesium. alpha-casein is the usual test substrate. In the absence of ATP, only oligopeptides shorter than five residues are hydrolyzed (such as succinyl-Leu-Tyr-|-NHMec, and Leu-Tyr-Leu-|-Tyr-Trp, in which cleavage of the -Tyr-|-Leu- and -Tyr-|-Trp bonds also occurs).. Functionally, cleaves peptides in various proteins in a process that requires ATP hydrolysis. Has a chymotrypsin-like activity. Plays a major role in the degradation of misfolded proteins. The chain is ATP-dependent Clp protease proteolytic subunit 1 from Frankia casuarinae (strain DSM 45818 / CECT 9043 / HFP020203 / CcI3).